Here is a 379-residue protein sequence, read N- to C-terminus: Chaperone protein DnaJ (379 aa).

The 66-residue stretch at 4–69 (DLYETLGVQK…QKRAAYDRYG (66 aa)) folds into the J domain. The CR-type zinc-finger motif lies at 137-215 (GKTAQIRVPT…CHGQGRVVEE (79 aa)). The Zn(2+) site is built by C150, C153, C167, C170, C189, C192, C203, and C206. 4 CXXCXGXG motif repeats span residues 150–157 (CDVCTGTG), 167–174 (CGTCQGTG), 189–196 (CPTCGGRG), and 203–210 (CTKCHGQG).

This sequence belongs to the DnaJ family. As to quaternary structure, homodimer. Zn(2+) is required as a cofactor.

It is found in the cytoplasm. Participates actively in the response to hyperosmotic and heat shock by preventing the aggregation of stress-denatured proteins and by disaggregating proteins, also in an autonomous, DnaK-independent fashion. Unfolded proteins bind initially to DnaJ; upon interaction with the DnaJ-bound protein, DnaK hydrolyzes its bound ATP, resulting in the formation of a stable complex. GrpE releases ADP from DnaK; ATP binding to DnaK triggers the release of the substrate protein, thus completing the reaction cycle. Several rounds of ATP-dependent interactions between DnaJ, DnaK and GrpE are required for fully efficient folding. Also involved, together with DnaK and GrpE, in the DNA replication of plasmids through activation of initiation proteins. The polypeptide is Chaperone protein DnaJ (Rhizobium meliloti (strain 1021) (Ensifer meliloti)).